Consider the following 54-residue polypeptide: Conotoxin mr5.4b (54 aa).

The N-terminal stretch at 1–14 (ILLLLIASAPSVDA) is a signal peptide. Residues 15 to 40 (QLKTKDDVPLASFHANVKRTLQKLLN) constitute a propeptide that is removed on maturation. Residue glutamate 52 is modified to 4-carboxyglutamate.

The protein belongs to the conotoxin T superfamily. Post-translationally, contains 2 disulfide bonds that can be either 'C1-C3, C2-C4' or 'C1-C4, C2-C3', since these disulfide connectivities have been observed for conotoxins with cysteine framework V (for examples, see AC P0DQQ7 and AC P81755). As to expression, expressed by the venom duct.

Its subcellular location is the secreted. The sequence is that of Conotoxin mr5.4b from Conus marmoreus (Marble cone).